Here is a 422-residue protein sequence, read N- to C-terminus: Tyrosine-protein kinase STYK1 (422 aa).

A helical membrane pass occupies residues 26–46 (VIIVPTLLVTIFLILLGVILW). The Protein kinase domain occupies 114 to 384 (SEVLEQICSG…ELRLRLEAAI (271 aa)). Residues 120–128 (ICSGSCGPI) and Lys-147 contribute to the ATP site. Asp-251 functions as the Proton acceptor in the catalytic mechanism.

This sequence belongs to the protein kinase superfamily. Tyr protein kinase family. In terms of tissue distribution, widely expressed. Highly expressed in brain, placenta and prostate. Expressed in tumor cells such as hepatoma cells L-02, cervix carcinoma cells HeLa, ovary cancer cells Ho8910 and chronic myelogenous leukemia cells K-562, but not in other tumor cells such as epidermoid carcinoma (A-431). Undetectable in most normal lung tissues, widely expressed in lung cancers.

It localises to the membrane. The enzyme catalyses L-tyrosyl-[protein] + ATP = O-phospho-L-tyrosyl-[protein] + ADP + H(+). Functionally, probable tyrosine protein-kinase, which has strong transforming capabilities on a variety of cell lines. When overexpressed, it can also induce tumor cell invasion as well as metastasis in distant organs. May act by activating both MAP kinase and phosphatidylinositol 3'-kinases (PI3K) pathways. This is Tyrosine-protein kinase STYK1 (STYK1) from Homo sapiens (Human).